The chain runs to 130 residues: Large ribosomal subunit protein bL17 (130 aa).

This sequence belongs to the bacterial ribosomal protein bL17 family. As to quaternary structure, part of the 50S ribosomal subunit. Contacts protein L32.

This chain is Large ribosomal subunit protein bL17, found in Nitrosomonas eutropha (strain DSM 101675 / C91 / Nm57).